Reading from the N-terminus, the 393-residue chain is NAD(P)H-quinone oxidoreductase subunit H, chloroplastic (393 aa).

The protein belongs to the complex I 49 kDa subunit family. As to quaternary structure, NDH is composed of at least 16 different subunits, 5 of which are encoded in the nucleus.

Its subcellular location is the plastid. It is found in the chloroplast thylakoid membrane. The catalysed reaction is a plastoquinone + NADH + (n+1) H(+)(in) = a plastoquinol + NAD(+) + n H(+)(out). It catalyses the reaction a plastoquinone + NADPH + (n+1) H(+)(in) = a plastoquinol + NADP(+) + n H(+)(out). In terms of biological role, NDH shuttles electrons from NAD(P)H:plastoquinone, via FMN and iron-sulfur (Fe-S) centers, to quinones in the photosynthetic chain and possibly in a chloroplast respiratory chain. The immediate electron acceptor for the enzyme in this species is believed to be plastoquinone. Couples the redox reaction to proton translocation, and thus conserves the redox energy in a proton gradient. This Platanus occidentalis (Sycamore) protein is NAD(P)H-quinone oxidoreductase subunit H, chloroplastic.